The sequence spans 189 residues: dCTP deaminase (189 aa).

DCTP contacts are provided by residues 112-117 (KSTYAR), 136-138 (TLE), glutamine 157, tyrosine 171, and glutamine 181. Glutamate 138 serves as the catalytic Proton donor/acceptor.

It belongs to the dCTP deaminase family. Homotrimer.

The enzyme catalyses dCTP + H2O + H(+) = dUTP + NH4(+). Its pathway is pyrimidine metabolism; dUMP biosynthesis; dUMP from dCTP (dUTP route): step 1/2. In terms of biological role, catalyzes the deamination of dCTP to dUTP. This Acinetobacter baumannii (strain SDF) protein is dCTP deaminase.